A 677-amino-acid polypeptide reads, in one-letter code: Envelope glycoprotein (677 aa).

Residues 1 to 33 (MGSGYQLLQLPRERFRKTSFLVWVIILFQRAIS) form the signal peptide. Residues 34-651 (MPLGIVTNST…DLNLWTGWRQ (618 aa)) lie on the Extracellular side of the membrane. Asn41 carries an N-linked (GlcNAc...) asparagine; by host glycan. Disulfide bonds link Cys54-Cys610, Cys109-Cys136, Cys122-Cys148, Cys512-Cys557, and Cys602-Cys609. Residues 55 to 202 (RDKLSSTSQL…HFWKATPAHE (148 aa)) are receptor-binding. N-linked (GlcNAc...) asparagine; by host glycans are attached at residues Asn205, Asn239, Asn258, Asn269, Asn297, Asn317, Asn318, Asn339, Asn406, Asn420, Asn435, and Asn463. The mucin-like region stretch occupies residues 306–486 (NLHFQILSTH…PSQPGLTINT (181 aa)). Residues 315 to 326 (HTNNSSDQSPAG) show a composition bias toward polar residues. Disordered regions lie at residues 315–349 (HTNNSSDQSPAGTVQGKISYHPPTNNSELVPTDSP), 370–483 (NGET…PGLT), and 489–508 (KVADSLSPTRKQKRSVRQNT). Composition is skewed to polar residues over residues 370-421 (NGET…ASNE), 428-445 (MNSIQGSNNSAQSPQTKA), and 458-472 (PQETANISKPGTSPG). The segment at 525–540 (GAAAGLAWIPYFGPAA) is fusion peptide. A coiled-coil region spans residues 555 to 596 (LICGLRQLANETTQALQLFLRATTELRTYSLLNRKAIDFLLQ). Asn564 is a glycosylation site (N-linked (GlcNAc...) asparagine; by host). Positions 616–635 (WTKNITDEINQIKHDFIDNP) form a coiled coil. Asn619 carries an N-linked (GlcNAc...) asparagine; by host glycan. The chain crosses the membrane as a helical span at residues 652-672 (WIPAGIGIIGVIIAIIALLCI). Residues Cys671 and Cys673 are each lipidated (S-palmitoyl cysteine; by host). The Cytoplasmic portion of the chain corresponds to 673–677 (CKILC).

This sequence belongs to the filoviruses glycoprotein family. Homotrimer; each monomer consists of a GP1 and a GP2 subunit linked by disulfide bonds. The resulting peplomers (GP1,2) protrude from the virus surface as spikes. Interacts with host integrin alpha-V/ITGAV. Interacts with host CLEC10A. Binds also to host CD209 and CLEC4M/DC-SIGN(R). Interacts with host FOLR1. Interacts with BST2; this interaction inhibits the antiviral effect of BST2 and this allows viral release from infected cells. Interacts with host FCN1; this interaction enhances viral entry. Interacts with host TLR4; this interaction induces cell death in T-lymphocytes or proinflammatory cytokines and SOCS1 production in monocytes. In terms of assembly, interacts with host entry receptor NPC1. As to quaternary structure, GP1 and GP2delta are part of GP1,2delta soluble complexes released by ectodomain shedding. The signal peptide region modulates GP's high mannose glycosylation, thereby determining the efficiency of the interactions with DC-SIGN(R). In terms of processing, N-glycosylated. Post-translationally, O-glycosylated in the mucin-like region. Palmitoylation of GP2 is not required for its function. In terms of processing, specific enzymatic cleavages in vivo yield mature proteins. The precursor is processed into GP1 and GP2 by host cell furin in the trans Golgi, and maybe by other host proteases, to yield the mature GP1 and GP2 proteins. The cleavage site corresponds to the furin optimal cleavage sequence [KR]-X-[KR]-R. This cleavage does not seem to be required for function. After the internalization of the virus into cell endosomes, GP1 C-terminus is removed by the endosomal proteases cathepsin B, cathepsin L, or both, leaving a 19-kDa N-terminal fragment which is further digested by cathepsin B. Proteolytic processing of GP1,2 by host ADAM17 can remove the transmembrane anchor of GP2 and leads to shedding of complexes consisting in GP1 and truncated GP2 (GP1,2delta).

The protein localises to the virion membrane. It is found in the host cell membrane. Its subcellular location is the secreted. Functionally, trimeric GP1,2 complexes form the virion surface spikes and mediate the viral entry processes, with GP1 acting as the receptor-binding subunit and GP2 as the membrane fusion subunit. At later times of infection, down-regulates the expression of various host cell surface molecules that are essential for immune surveillance and cell adhesion. Down-modulates several integrins including ITGA1, ITGA2, ITGA3, ITGA4, ITGA5, ITGA6, ITGAV and ITGB1. This decrease in cell adhesion molecules may lead to cell detachment, contributing to the disruption of blood vessel integrity and hemorrhages developed during infection (cytotoxicity). Interacts with host TLR4 and thereby stimulates the differentiation and activation of monocytes leading to bystander death of T-lymphocytes. Down-regulates as well the function of host natural killer cells. Counteracts the antiviral effect of host BST2/tetherin that restricts release of progeny virions from infected cells. However, cooperates with VP40 and host BST2 to activate canonical NF-kappa-B pathway in a manner dependent on neddylation. In terms of biological role, functions as a decoy for anti-GP1,2 antibodies thereby contributing to viral immune evasion. Interacts and activates host macrophages and dendritic cells inducing up-regulation of cytokine transcription. This effect is mediated throught activation of host TLR4. Its function is as follows. Responsible for binding to the receptor(s) on target cells. Interacts with CD209/DC-SIGN and CLEC4M/DC-SIGNR which act as cofactors for virus entry into dendritic cells (DCs) and endothelial cells. Binding to the macrophage specific lectin CLEC10A also seems to enhance virus infectivity. Interaction with FOLR1/folate receptor alpha may be a cofactor for virus entry in some cell types, although results are contradictory. Members of the Tyro3 receptor tyrosine kinase family also seem to be cell entry factors in filovirus infection. Once attached, the virions are internalized through clathrin-dependent endocytosis and/or macropinocytosis. After internalization of the virus into the endosomes of the host cell, proteolysis of GP1 by two cysteine proteases, CTSB/cathepsin B and CTSL/cathepsin L removes the glycan cap and allows GP1 binding to the host entry receptor NPC1. NPC1-binding, Ca(2+) and acidic pH induce a conformational change of GP2, which unmasks its fusion peptide and permit membranes fusion. Acts as a class I viral fusion protein. Under the current model, the protein has at least 3 conformational states: pre-fusion native state, pre-hairpin intermediate state, and post-fusion hairpin state. During viral and target cell membrane fusion, the coiled coil regions (heptad repeats) assume a trimer-of-hairpins structure, positioning the fusion peptide in close proximity to the C-terminal region of the ectodomain. The formation of this structure appears to drive apposition and subsequent fusion of viral and target cell membranes. Responsible for penetration of the virus into the cell cytoplasm by mediating the fusion of the membrane of the endocytosed virus particle with the endosomal membrane. Low pH in endosomes induces an irreversible conformational change in GP2, releasing the fusion hydrophobic peptide. This is Envelope glycoprotein (GP) from Reston ebolavirus (strain Philippines-96) (REBOV).